We begin with the raw amino-acid sequence, 276 residues long: Putative pyridoxine kinase (276 aa).

An ATP-binding site is contributed by Asn139. Glu142 provides a ligand contact to Mg(2+). ATP is bound by residues Lys176 to Ala180, Asp188, Gly213, and Lys238.

The protein belongs to the ThiD family.

The enzyme catalyses pyridoxal + ATP = pyridoxal 5'-phosphate + ADP + H(+). Its function is as follows. Phosphorylates B6 vitamers; functions in a salvage pathway. Uses pyridoxal, pyridoxine, and pyridoxamine as substrates. The chain is Putative pyridoxine kinase (pdxK) from Staphylococcus epidermidis (strain ATCC 12228 / FDA PCI 1200).